A 129-amino-acid chain; its full sequence is UPF0325 protein YE3288 (129 aa).

It belongs to the UPF0325 family.

In Yersinia enterocolitica serotype O:8 / biotype 1B (strain NCTC 13174 / 8081), this protein is UPF0325 protein YE3288.